Reading from the N-terminus, the 182-residue chain is ATP-dependent protease subunit HslV (182 aa).

Residue T7 is part of the active site. G162, C165, and T168 together coordinate Na(+).

Belongs to the peptidase T1B family. HslV subfamily. As to quaternary structure, a double ring-shaped homohexamer of HslV is capped on each side by a ring-shaped HslU homohexamer. The assembly of the HslU/HslV complex is dependent on binding of ATP.

The protein localises to the cytoplasm. It catalyses the reaction ATP-dependent cleavage of peptide bonds with broad specificity.. With respect to regulation, allosterically activated by HslU binding. Its function is as follows. Protease subunit of a proteasome-like degradation complex believed to be a general protein degrading machinery. In Legionella pneumophila subsp. pneumophila (strain Philadelphia 1 / ATCC 33152 / DSM 7513), this protein is ATP-dependent protease subunit HslV.